The primary structure comprises 324 residues: MALGPSPYYGVSFFQFFSVFFSRLFSGSLFTGSLYIDDIQIIVFLAISCSGAFAGTFLVLRKMAMYANAVSHTVLFGLVCVCLFTHQLTTLSLGTLTLAAMATAMLTGFLIYFIRNTFKVSEESSTALVFSLLFSLSLVLLVFMTKNAHIGTELVLGNADSLTKEDIFPVTIVILANAVITIFAFRSLVCSSFDSVFASSLGIPIRLVDYLIIFQLSACLVGAFKAVGVLMALAFLIIPSLIAKVIAKSIRSLMAWSLVFSIGTAFLAPASSRAILSAYDLGLSTSGISVVFLTMMYIVVKFISYFRGYFSKNFEKISEKSSQY.

The next 10 membrane-spanning stretches (helical) occupy residues 1–21 (MALG…SVFF), 39–59 (IQII…TFLV), 64–84 (AMYA…VCLF), 94–114 (GTLT…IYFI), 125–145 (STAL…VFMT), 165–185 (EDIF…IFAF), 201–221 (LGIP…ACLV), 226–246 (AVGV…AKVI), 252–272 (SLMA…PASS), and 286–306 (SGIS…ISYF).

It belongs to the ABC-3 integral membrane protein family.

Its subcellular location is the cell inner membrane. Part of an ATP-driven transport system CPn_0346/CPn_0347/CPn_0348/CPn_0349 for a metal. In Chlamydia pneumoniae (Chlamydophila pneumoniae), this protein is Probable metal transport system membrane protein CPn_0346/CP_0414/CPj0346/CpB0353.